Reading from the N-terminus, the 150-residue chain is Large ribosomal subunit protein uL13 (150 aa).

Residues 127-150 form a disordered region; the sequence is KGTEHPHSAQKPQPLQLNPSATAK. A compositionally biased stretch (polar residues) spans 136 to 150; sequence QKPQPLQLNPSATAK.

This sequence belongs to the universal ribosomal protein uL13 family. In terms of assembly, part of the 50S ribosomal subunit.

Its function is as follows. This protein is one of the early assembly proteins of the 50S ribosomal subunit, although it is not seen to bind rRNA by itself. It is important during the early stages of 50S assembly. In Synechococcus sp. (strain CC9902), this protein is Large ribosomal subunit protein uL13.